A 128-amino-acid chain; its full sequence is Large ribosomal subunit protein uL22 (128 aa).

This sequence belongs to the universal ribosomal protein uL22 family. As to quaternary structure, part of the 50S ribosomal subunit.

This protein binds specifically to 23S rRNA; its binding is stimulated by other ribosomal proteins, e.g. L4, L17, and L20. It is important during the early stages of 50S assembly. It makes multiple contacts with different domains of the 23S rRNA in the assembled 50S subunit and ribosome. Functionally, the globular domain of the protein is located near the polypeptide exit tunnel on the outside of the subunit, while an extended beta-hairpin is found that lines the wall of the exit tunnel in the center of the 70S ribosome. This is Large ribosomal subunit protein uL22 from Rhodopseudomonas palustris (strain HaA2).